An 883-amino-acid polypeptide reads, in one-letter code: Phosphoenolpyruvate carboxylase (883 aa).

Catalysis depends on residues histidine 138 and lysine 546.

This sequence belongs to the PEPCase type 1 family. Mg(2+) serves as cofactor.

It catalyses the reaction oxaloacetate + phosphate = phosphoenolpyruvate + hydrogencarbonate. Its function is as follows. Forms oxaloacetate, a four-carbon dicarboxylic acid source for the tricarboxylic acid cycle. This chain is Phosphoenolpyruvate carboxylase, found in Shigella flexneri.